Consider the following 506-residue polypeptide: Xaa-Pro aminopeptidase 3 (506 aa).

The N-terminal 31 residues, 1–31 (MLSLLSTPRLVPVIARLRGLSGCMSCLQRRY), are a transit peptide targeting the mitochondrion. An interaction with TNFRSF1B region spans residues 54–79 (HPHLLRPGEVTPGLSQVEYALRRHKL). Substrate contacts are provided by Tyr300, Asp331, Asp342, His423, His430, Glu450, and Glu474. Residues Asp331, Asp342, and His423 each contribute to the Mn(2+) site. 2 residues coordinate Mn(2+): Glu450 and Glu474.

This sequence belongs to the peptidase M24B family. In terms of assembly, homodimer. Interacts with TNFRSF1B/TNFR2 (activated) and TRAF2. Mn(2+) is required as a cofactor. As to expression, expressed in the kidney, specifically in intercalated cells, but not in principal cells, of the distal convoluted tubule and cortical collecting duct (at protein level).

It localises to the mitochondrion. It is found in the cytoplasm. It carries out the reaction Release of any N-terminal amino acid, including proline, that is linked to proline, even from a dipeptide or tripeptide.. Catalyzes the removal of a penultimate prolyl residue from the N-termini of peptides, such as Leu-Pro-Ala. Also shows low activity towards peptides with Ala or Ser at the P1 position. Promotes TNFRSF1B-mediated phosphorylation of MAPK8/JNK1 and MAPK9/JNK2, suggesting a function as an adapter protein for TNFRSF1B; the effect is independent of XPNPEP3 peptidase activity. May inhibit apoptotic cell death induced via TNF-TNFRSF1B signaling. This Rattus norvegicus (Rat) protein is Xaa-Pro aminopeptidase 3 (Xpnpep3).